Here is a 100-residue protein sequence, read N- to C-terminus: MAPSQKALLVLVLSMLLTASDSWARRIDCKVFVFAPICRGVAAKRGGDSLSVGGSAELDDALTDPFLRSEEPREWRELTRLSRVLQTFLSHPTGETEQHD.

Positions methionine 1–alanine 24 are cleaved as a signal peptide. Cysteine 29 and cysteine 38 are disulfide-bonded. Positions lysine 44–aspartate 100 are excised as a propeptide.

It belongs to the elevenin family. In terms of assembly, monomer. In terms of tissue distribution, expressed by the venom duct.

The protein resides in the secreted. May mimic the function of prey elevenin neuropeptide. In vivo, intracranial injection in mice induces hyperactivity (tested at 5 and 10 nM). In Conus victoriae (Queen Victoria cone), this protein is Elevenin-Vc1.